Reading from the N-terminus, the 470-residue chain is Chromosomal replication initiator protein DnaA (470 aa).

Positions 1–79 (MTDDTWGLLR…AVQRLAFKVA (79 aa)) are domain I, interacts with DnaA modulators. The tract at residues 79–128 (AANSPTRPVQPTMSEAIEEPAPLQTTVVDQLGNQEGNTSVKSPPEDLQAA) is domain II. Positions 129 to 350 (PLDPRFTFDS…GALTRLFAFA (222 aa)) are domain III, AAA+ region. Positions 173, 175, 176, and 177 each coordinate ATP. The interval 351–470 (SLVGREIDMD…VEMLRRSLEA (120 aa)) is domain IV, binds dsDNA.

It belongs to the DnaA family. In terms of assembly, oligomerizes as a right-handed, spiral filament on DNA at oriC.

The protein resides in the cytoplasm. Functionally, plays an essential role in the initiation and regulation of chromosomal replication. ATP-DnaA binds to the origin of replication (oriC) to initiate formation of the DNA replication initiation complex once per cell cycle. Binds the DnaA box (a 9 base pair repeat at the origin) and separates the double-stranded (ds)DNA. Forms a right-handed helical filament on oriC DNA; dsDNA binds to the exterior of the filament while single-stranded (ss)DNA is stabiized in the filament's interior. The ATP-DnaA-oriC complex binds and stabilizes one strand of the AT-rich DNA unwinding element (DUE), permitting loading of DNA polymerase. After initiation quickly degrades to an ADP-DnaA complex that is not apt for DNA replication. Binds acidic phospholipids. The protein is Chromosomal replication initiator protein DnaA of Ruegeria sp. (strain TM1040) (Silicibacter sp.).